The following is a 119-amino-acid chain: Flagellar transcriptional regulator FlhD (119 aa).

It belongs to the FlhD family. Homodimer; disulfide-linked. Forms a heterohexamer composed of two FlhC and four FlhD subunits. Each FlhC binds a FlhD dimer, forming a heterotrimer, and a hexamer assembles by dimerization of two heterotrimers.

It localises to the cytoplasm. Its function is as follows. Functions in complex with FlhC as a master transcriptional regulator that regulates transcription of several flagellar and non-flagellar operons by binding to their promoter region. Activates expression of class 2 flagellar genes, including fliA, which is a flagellum-specific sigma factor that turns on the class 3 genes. Also regulates genes whose products function in a variety of physiological pathways. This chain is Flagellar transcriptional regulator FlhD, found in Shigella boydii serotype 4 (strain Sb227).